A 156-amino-acid chain; its full sequence is CKLF-like MARVEL transmembrane domain-containing protein 5 (156 aa).

The MARVEL domain maps to 29 to 146 (FLSSLKGILL…DAFKIYRTEL (118 aa)). A run of 4 helical transmembrane segments spans residues 35–55 (GILL…FTAS), 56–76 (ISAY…FLFL), 93–113 (LDFL…FAAV), and 119–139 (AAIA…YDAF).

Belongs to the chemokine-like factor family.

Its subcellular location is the membrane. The polypeptide is CKLF-like MARVEL transmembrane domain-containing protein 5 (Cmtm5) (Mus musculus (Mouse)).